The sequence spans 209 residues: Probable GTP-binding protein EngB (209 aa).

The EngB-type G domain maps to 22-198; sequence TPLEIAFVGR…NRTVGSWLDA (177 aa). Residues serine 37 and threonine 59 each coordinate Mg(2+).

This sequence belongs to the TRAFAC class TrmE-Era-EngA-EngB-Septin-like GTPase superfamily. EngB GTPase family. The cofactor is Mg(2+).

Functionally, necessary for normal cell division and for the maintenance of normal septation. This chain is Probable GTP-binding protein EngB, found in Neisseria meningitidis serogroup B (strain ATCC BAA-335 / MC58).